The chain runs to 242 residues: Immunity protein TsiV2 (242 aa).

3 helical membrane-spanning segments follow: residues 39-59, 66-86, and 118-138; these read VFGA…FADI, FWGF…LFMP, and FAWV…PLAF.

Its subcellular location is the host membrane. Immunity protein that plays a role in preventing early activation of toxin VasX. In Vibrio cholerae serotype O1 (strain ATCC 39315 / El Tor Inaba N16961), this protein is Immunity protein TsiV2.